The following is a 120-amino-acid chain: ATP-dependent Clp protease adapter protein ClpS (120 aa).

This sequence belongs to the ClpS family. As to quaternary structure, binds to the N-terminal domain of the chaperone ClpA.

In terms of biological role, involved in the modulation of the specificity of the ClpAP-mediated ATP-dependent protein degradation. This chain is ATP-dependent Clp protease adapter protein ClpS, found in Pseudomonas syringae pv. syringae (strain B728a).